Reading from the N-terminus, the 465-residue chain is Protein dml1 (465 aa).

Phosphoserine is present on S446.

This sequence belongs to the misato family.

The protein resides in the mitochondrion. Involved in the partitioning of the mitochondrial organelle and mitochondrial DNA (mtDNA) inheritance. The protein is Protein dml1 (dml1) of Schizosaccharomyces pombe (strain 972 / ATCC 24843) (Fission yeast).